The following is a 228-amino-acid chain: Uracil-DNA glycosylase (228 aa).

Catalysis depends on aspartate 64, which acts as the Proton acceptor.

The protein belongs to the uracil-DNA glycosylase (UDG) superfamily. UNG family.

The protein resides in the cytoplasm. It catalyses the reaction Hydrolyzes single-stranded DNA or mismatched double-stranded DNA and polynucleotides, releasing free uracil.. Excises uracil residues from the DNA which can arise as a result of misincorporation of dUMP residues by DNA polymerase or due to deamination of cytosine. The protein is Uracil-DNA glycosylase of Yersinia pseudotuberculosis serotype IB (strain PB1/+).